A 410-amino-acid polypeptide reads, in one-letter code: Protein translocase subunit SecY 2 (410 aa).

Helical transmembrane passes span 2–22, 45–65, 94–114, 125–145, 147–167, 188–208, 241–261, 284–304, 339–359, and 366–386; these read ILII…SAAL, FSIM…VQLL, LTLV…NTLT, FTII…MWLG, LITE…GILV, WIRF…IVWF, VIPV…LMFF, GVII…IVQI, YLSL…LLVA, and LQIG…IEIG.

Belongs to the SecY/SEC61-alpha family. As to quaternary structure, component of the Sec protein translocase complex. Heterotrimer consisting of SecY, SecE and SecG subunits. The heterotrimers can form oligomers, although 1 heterotrimer is thought to be able to translocate proteins. Interacts with the ribosome. Interacts with SecDF, and other proteins may be involved. Interacts with SecA.

Its subcellular location is the cell membrane. The central subunit of the protein translocation channel SecYEG. Consists of two halves formed by TMs 1-5 and 6-10. These two domains form a lateral gate at the front which open onto the bilayer between TMs 2 and 7, and are clamped together by SecE at the back. The channel is closed by both a pore ring composed of hydrophobic SecY resides and a short helix (helix 2A) on the extracellular side of the membrane which forms a plug. The plug probably moves laterally to allow the channel to open. The ring and the pore may move independently. In Lactobacillus kefiranofaciens subsp. kefiranofaciens, this protein is Protein translocase subunit SecY 2.